Reading from the N-terminus, the 224-residue chain is DNA mismatch repair protein MutH (224 aa).

The protein belongs to the MutH family.

It localises to the cytoplasm. Sequence-specific endonuclease that cleaves unmethylated GATC sequences. It is involved in DNA mismatch repair. The polypeptide is DNA mismatch repair protein MutH (Histophilus somni (strain 129Pt) (Haemophilus somnus)).